The chain runs to 355 residues: SH3 domain-containing protein Dlish (355 aa).

3 consecutive SH3 domains span residues Ser57 to Thr117, Glu183 to Ser243, and Tyr287 to Met352.

Interacts with dachs (via C-terminus); the interaction is direct. Interacts (via N-terminus including SH3 domain 1) with palmitoyltransferase app; this leads to palmitoylation of Dlish by app. Also interacts with dco, ft, ft-regulated E3 ubiquitin ligase Fbxl7, F-box protein slmb and SCF E3 ubiquitin-protein ligase complex component Cul1. Palmitoylated by app.

The protein localises to the cytoplasm. The protein resides in the cell cortex. Required for the apical cell cortex localization, total cellular level and full activity of dachs. This chain is SH3 domain-containing protein Dlish, found in Drosophila melanogaster (Fruit fly).